The chain runs to 303 residues: Heme A synthase (303 aa).

Topologically, residues 1–8 (MFGKKNLK) are cytoplasmic. The chain crosses the membrane as a helical span at residues 9 to 29 (WLGVVATLMMTFVQLGGALVT). The Extracellular segment spans residues 30-67 (KTGSADGCGSSWPLCHGALIPEFFPIDTIIELSHRAVS). An intrachain disulfide couples Cys37 to Cys44. Residue Glu60 is part of the active site. Residue His63 participates in heme o binding. Residues 68 to 88 (ALSLLMVLWLVITAWKHIGYI) form a helical membrane-spanning segment. Over 89–93 (KEIKP) the chain is Cytoplasmic. A helical transmembrane segment spans residues 94 to 114 (LSIISVGFLLLQALIGAAAVI). Residues 115 to 125 (WQQNDYVLALH) are Extracellular-facing. Residue His125 participates in heme o binding. The chain crosses the membrane as a helical span at residues 126–146 (FGISLISFSSVFLITLIIFSI). The Cytoplasmic segment spans residues 147 to 163 (DQKYEADELYIKKPLRR). Residues 164–184 (LTWLMAIIIYCGVYTGALVRH) traverse the membrane as a helical segment. Residues 185–215 (ADASLAYGGWPLPFHDLVPHSEQDWVQLTHR) are Extracellular-facing. His214 contacts heme b. A helical membrane pass occupies residues 216 to 236 (IMAFIVFTIIMITYIHAVKNY). Residues 237 to 244 (PNNRTVHY) lie on the Cytoplasmic side of the membrane. A helical transmembrane segment spans residues 245–265 (GYTAAFILVILQVITGALSIM). The Extracellular portion of the chain corresponds to 266–270 (TNVNL). The helical transmembrane segment at 271–291 (IIALFHALFITYLFGMTTYFI) threads the bilayer. Residue His276 participates in heme b binding. The Cytoplasmic segment spans residues 292–303 (MLMLRSVRSDKQ).

It belongs to the COX15/CtaA family. Type 1 subfamily. Interacts with CtaB. The cofactor is heme b.

It localises to the cell membrane. It carries out the reaction Fe(II)-heme o + 2 A + H2O = Fe(II)-heme a + 2 AH2. It participates in porphyrin-containing compound metabolism; heme A biosynthesis; heme A from heme O: step 1/1. Its function is as follows. Catalyzes the conversion of heme O to heme A by two successive hydroxylations of the methyl group at C8. The first hydroxylation forms heme I, the second hydroxylation results in an unstable dihydroxymethyl group, which spontaneously dehydrates, resulting in the formyl group of heme A. In Staphylococcus aureus (strain Mu3 / ATCC 700698), this protein is Heme A synthase.